Reading from the N-terminus, the 190-residue chain is uncharacterized protein (190 aa).

An N-terminal signal peptide occupies residues 1–15 (MKVFAYIALATVVAG).

It is found in the secreted. This is an uncharacterized protein from Arthroderma benhamiae (strain ATCC MYA-4681 / CBS 112371) (Trichophyton mentagrophytes).